Consider the following 66-residue polypeptide: UPF0370 protein YpfN (66 aa).

A helical transmembrane segment spans residues 4 to 24 (LAKYWWILVLVFLVGVLLNVI). The tract at residues 39-66 (KPELPPHRDFNDKWDDEEDWPKKDQPKK) is disordered. The span at 42-51 (LPPHRDFNDK) shows a compositional bias: basic and acidic residues.

Belongs to the UPF0370 family.

Its subcellular location is the cell membrane. In Salmonella paratyphi A (strain AKU_12601), this protein is UPF0370 protein YpfN.